The sequence spans 283 residues: 4-diphosphocytidyl-2-C-methyl-D-erythritol kinase (283 aa).

K10 is an active-site residue. Residue 99–109 (PMGGGLGGGSS) coordinates ATP. Residue D141 is part of the active site.

Belongs to the GHMP kinase family. IspE subfamily. In terms of assembly, homodimer.

It catalyses the reaction 4-CDP-2-C-methyl-D-erythritol + ATP = 4-CDP-2-C-methyl-D-erythritol 2-phosphate + ADP + H(+). It participates in isoprenoid biosynthesis; isopentenyl diphosphate biosynthesis via DXP pathway; isopentenyl diphosphate from 1-deoxy-D-xylulose 5-phosphate: step 3/6. Catalyzes the phosphorylation of the position 2 hydroxy group of 4-diphosphocytidyl-2C-methyl-D-erythritol. This chain is 4-diphosphocytidyl-2-C-methyl-D-erythritol kinase, found in Salmonella choleraesuis (strain SC-B67).